We begin with the raw amino-acid sequence, 188 residues long: HTH-type transcriptional repressor AcnR (188 aa).

The 61-residue stretch at 10-70 (VNSRQEILEG…ALAREDAARM (61 aa)) folds into the HTH tetR-type domain. Residues 33–52 (TVRRLEEATGKSRGAIFHHF) constitute a DNA-binding region (H-T-H motif). Residues 79–80 (LV), Arg-130, and Asn-134 contribute to the citrate site. Position 181 (Glu-181) interacts with Mg(2+). Position 185 (Arg-185) interacts with citrate.

In terms of assembly, homodimer.

Functionally, acnR negatively controls the expression of the aconitase gene acn. The sequence is that of HTH-type transcriptional repressor AcnR from Corynebacterium efficiens (strain DSM 44549 / YS-314 / AJ 12310 / JCM 11189 / NBRC 100395).